Consider the following 87-residue polypeptide: Putative septation protein SpoVG (87 aa).

Belongs to the SpoVG family.

In terms of biological role, could be involved in septation. This is Putative septation protein SpoVG from Agathobacter rectalis (strain ATCC 33656 / DSM 3377 / JCM 17463 / KCTC 5835 / VPI 0990) (Eubacterium rectale).